A 127-amino-acid polypeptide reads, in one-letter code: Ribonuclease P protein component (127 aa).

The protein belongs to the RnpA family. In terms of assembly, consists of a catalytic RNA component (M1 or rnpB) and a protein subunit.

It catalyses the reaction Endonucleolytic cleavage of RNA, removing 5'-extranucleotides from tRNA precursor.. Functionally, RNaseP catalyzes the removal of the 5'-leader sequence from pre-tRNA to produce the mature 5'-terminus. It can also cleave other RNA substrates such as 4.5S RNA. The protein component plays an auxiliary but essential role in vivo by binding to the 5'-leader sequence and broadening the substrate specificity of the ribozyme. This Corynebacterium urealyticum (strain ATCC 43042 / DSM 7109) protein is Ribonuclease P protein component.